Here is a 1083-residue protein sequence, read N- to C-terminus: Solute carrier family 12 member 7 (1083 aa).

The segment at 1–52 (MPTNFTVVPVEAHADGGGDETAERTEAPGTPEGPEPERPSPGDGNPRENSPF) is disordered. At 1–119 (MPTNFTVVPV…RREAKAPRMG (119 aa)) the chain is on the cytoplasmic side. Residues 12 to 26 (AHADGGGDETAERTE) are compositionally biased toward basic and acidic residues. At Thr30 the chain carries Phosphothreonine. Phosphoserine is present on residues Ser50 and Ser62. A discontinuously helical membrane pass occupies residues 120–142 (TFIGVYLPCLQNILGVILFLRLT). K(+) contacts are provided by Asn131 and Ile132. Val135 provides a ligand contact to chloride. Topologically, residues 143–149 (WIVGVAG) are extracellular. The helical transmembrane segment at 150–172 (VLESFLIVAMCCTCTMLTAISMS) threads the bilayer. Over 173 to 196 (AIATNGVVPAGGSYYMISRSLGPE) the chain is Cytoplasmic. Residues 197-225 (FGGAVGLCFYLGTTFAGAMYILGTIEIFL) traverse the membrane as a helical segment. Residues 226–249 (TYISPGAAIFQAEAAGGEAAAMLH) lie on the Extracellular side of the membrane. 2 helical membrane-spanning segments follow: residues 250–270 (NMRVYGTCTLVLMALVVFVGV) and 272–300 (YVNKLALVFLACVVLSILAIYAGVIKSAF). The Extracellular portion of the chain corresponds to 301 to 419 (DPPDIPVCLL…PYVLTDIAAS (119 aa)). Cystine bridges form between Cys308/Cys323 and Cys343/Cys352. Asn312 carries an N-linked (GlcNAc...) asparagine glycan. An N-linked (GlcNAc...) asparagine glycan is attached at Asn360. Residues 420 to 440 (FTLLVGIYFPSVTGIMAGSNR) traverse the membrane as a helical segment. 2 residues coordinate K(+): Pro429 and Thr432. Pro429 contributes to the chloride binding site. Gly433 and Ile434 together coordinate chloride. The Cytoplasmic portion of the chain corresponds to 441–450 (SGDLKDAQKS). Residues 451 to 473 (IPTGTILAIVTTSFIYLSCIVLF) form a helical membrane-spanning segment. The Extracellular portion of the chain corresponds to 474 to 504 (GACIEGVVLRDKFGEALQGNLVIGMLAWPSP). A helical membrane pass occupies residues 505 to 531 (WVIVIGSFFSTCGAGLQSLTGAPRLLQ). The Cytoplasmic segment spans residues 532–554 (AIARDGIVPFLQVFGHGKANGEP). 2 helical membrane-spanning segments follow: residues 555–571 (TWALLLTVLICETGILI) and 574–598 (LDSVAPILSMFFLMCYLFVNLACAV). Tyr589 is a chloride binding site. Residues 599-612 (QTLLRTPNWRPRFK) lie on the Cytoplasmic side of the membrane. A run of 2 helical transmembrane segments spans residues 613-632 (FYHWTLSFLGMSLCLALMFI) and 636-651 (YYALSAMLIAGCIYKY). At 652–1083 (IEYRGAEKEW…GGREVITIYS (432 aa)) the chain is on the cytoplasmic side. The tract at residues 664–680 (GIRGLSLNAARYALLRV) is scissor helix. Phosphothreonine occurs at positions 973 and 980.

Belongs to the SLC12A transporter family. K/Cl co-transporter subfamily. Homodimer; adopts a domain-swap conformation at the scissor helices connecting the transmembrane domain and C-terminal domain. Heterodimer with K-Cl cotransporter SLC12A5. In terms of tissue distribution, detected in muscle, brain, lung, heart and kidney.

It is found in the cell membrane. It catalyses the reaction K(+)(in) + chloride(in) = K(+)(out) + chloride(out). Activated by N-ethylmaleimide (NEM). Inhibited by furosemide, DIDS and bumetanide. The inhibition is much stronger in the presence of 50 mM K(+) in the uptake medium. Inhibited by DIOA. Inhibited by WNK3. Its function is as follows. Mediates electroneutral potassium-chloride cotransport when activated by cell swelling. May mediate K(+) uptake into Deiters' cells in the cochlea and contribute to K(+) recycling in the inner ear. Important for the survival of cochlear outer and inner hair cells and the maintenance of the organ of Corti. May be required for basolateral Cl(-) extrusion in the kidney and contribute to renal acidification. This is Solute carrier family 12 member 7 from Homo sapiens (Human).